Here is a 464-residue protein sequence, read N- to C-terminus: Serine--tRNA synthetase-like protein Slimp (464 aa).

The protein belongs to the class-II aminoacyl-tRNA synthetase family. Type-1 seryl-tRNA synthetase subfamily.

The protein resides in the mitochondrion. Essential protein which may play a role in mitochondrial morphogenesis and function. Has transfer RNA (tRNA)-binding activity and can bind tRNA(Ser) but does not have serine--tRNA ligase activity and does not bind ATP. In Drosophila melanogaster (Fruit fly), this protein is Serine--tRNA synthetase-like protein Slimp.